A 734-amino-acid polypeptide reads, in one-letter code: MATKFPKFSQSLSSDPTTRRIWYGIATSHDFEAHDNVTEENLYQKIFASHFGHLAIIFLWTSGNLFHVAWQGNFEAWIANPLKVKPVAHAIWDPHFGQAALKAFSRGGVNYPVDISYSGVYHWWYTIGMRTSSDLYAGALFLLVLAALCMFAGRLHLQPKFKPSISWFKNNESRLNHHLSGLFGLSSLAWCGHLIHVAIPASRGQHIGWNNFLTTPPHPAGLKPFFTGNWSDYSLNPDDPSHIFGTSSNSGKAILTFLGGFHPQTQSLWLTDIAHHHLAIAVIFIIAGHMYRTNFGIGHNIKDILEAHKPPSGKMGLGHKGLFNTISNSLHFQLGLALACLGVLSSLTAQHLYSIPPYAFISRDFVTQAALYTHHQYIAGFLMVGAFAHGAIFFVRDYDPKQNKDNVLYRMLEHKEAIISHLSWVSLFLGFHTLGLYVHNDVVVAFGNPEKQILIEPIFAQWIQATSGKTLYGFNVLLASSSSSATQAAQSLWLPNWLEAINNNNNSLFLTIGPGDFLVHHAIALGLHTTTLILVKGALDARGSKLMPDKKDFGYSFPCDGPGRGGTCDISAWDAFYLGVFWMLNTIGWTTFYWHWKHITIWQGNASQFNESSTYLMGWFRDYLWLNSSPIINGYNPYGMNNLSVWAWMFLFAHLVWATGFMFLISWRGYWQELIESLVWAHERTPLANLITWKDKPVALSIVQARLVGLVHFSVGYVLTYAAFVIASTAGKFN.

8 helical membrane passes run 46-69, 135-158, 175-199, 273-291, 330-353, 369-395, 417-439, and 517-535; these read IFASHFGHLAIIFLWTSGNLFHVA, LYAGALFLLVLAALCMFAGRLHLQ, LNHHLSGLFGLSSLAWCGHLIHVAI, IAHHHLAIAVIFIIAGHMY, LHFQLGLALACLGVLSSLTAQHLY, AALYTHHQYIAGFLMVGAFAHGAIFFV, AIISHLSWVSLFLGFHTLGLYVH, and FLVHHAIALGLHTTTLILV. 2 residues coordinate [4Fe-4S] cluster: Cys559 and Cys568. The next 2 helical transmembrane spans lie at 575-596 and 643-665; these read AFYLGVFWMLNTIGWTTFYWHW and LSVWAWMFLFAHLVWATGFMFLI. Residues His654, Met662, and Tyr670 each contribute to the chlorophyll a site. Trp671 contributes to the phylloquinone binding site. Residues 707–727 traverse the membrane as a helical segment; that stretch reads LVGLVHFSVGYVLTYAAFVIA.

This sequence belongs to the PsaA/PsaB family. The PsaA/B heterodimer binds the P700 chlorophyll special pair and subsequent electron acceptors. PSI consists of a core antenna complex that captures photons, and an electron transfer chain that converts photonic excitation into a charge separation. The eukaryotic PSI reaction center is composed of at least 11 subunits. The cofactor is P700 is a chlorophyll a/chlorophyll a' dimer, A0 is one or more chlorophyll a, A1 is one or both phylloquinones and FX is a shared 4Fe-4S iron-sulfur center..

The protein resides in the plastid. Its subcellular location is the chloroplast thylakoid membrane. The enzyme catalyses reduced [plastocyanin] + hnu + oxidized [2Fe-2S]-[ferredoxin] = oxidized [plastocyanin] + reduced [2Fe-2S]-[ferredoxin]. Functionally, psaA and PsaB bind P700, the primary electron donor of photosystem I (PSI), as well as the electron acceptors A0, A1 and FX. PSI is a plastocyanin/cytochrome c6-ferredoxin oxidoreductase, converting photonic excitation into a charge separation, which transfers an electron from the donor P700 chlorophyll pair to the spectroscopically characterized acceptors A0, A1, FX, FA and FB in turn. Oxidized P700 is reduced on the lumenal side of the thylakoid membrane by plastocyanin or cytochrome c6. This chain is Photosystem I P700 chlorophyll a apoprotein A2, found in Cyanidium caldarium (Red alga).